A 442-amino-acid chain; its full sequence is Coiled-coil domain-containing protein 91 (442 aa).

Residues 1-16 (MDDDDFGGFEAAETFD) form a GGA1-binding motif region. A disordered region spans residues 1–27 (MDDDDFGGFEAAETFDGEQGGNQAVSP). S43 and S46 each carry phosphoserine. The disordered stretch occupies residues 48-79 (ELILDHDRSSPSSGHLRSDAVISSPDDTRADS). Coiled coils occupy residues 127 to 213 (GVHV…ALSI) and 248 to 409 (CEEL…RLDQ). The homodimerization stretch occupies residues 211-414 (LSIIVDEYKA…RRLDQVTRQR (204 aa)).

In terms of assembly, homodimer. Interacts with GGA1, GGA2 and AP1G1.

It is found in the membrane. It localises to the golgi apparatus. The protein resides in the trans-Golgi network membrane. The protein localises to the trans-Golgi network. Involved in the regulation of membrane traffic through the trans-Golgi network (TGN). Functions in close cooperation with the GGAs in the sorting of hydrolases to lysosomes. The polypeptide is Coiled-coil domain-containing protein 91 (Ccdc91) (Rattus norvegicus (Rat)).